We begin with the raw amino-acid sequence, 348 residues long: Lipopolysaccharide heptosyltransferase 2 (348 aa).

The protein belongs to the glycosyltransferase 9 family.

It catalyses the reaction an L-alpha-D-Hep-(1-&gt;5)-[alpha-Kdo-(2-&gt;4)]-alpha-Kdo-(2-&gt;6)-lipid A + ADP-L-glycero-beta-D-manno-heptose = an L-alpha-D-Hep-(1-&gt;3)-L-alpha-D-Hep-(1-&gt;5)-[alpha-Kdo-(2-&gt;4)]-alpha-Kdo-(2-&gt;6)-lipid A + ADP + H(+). Its pathway is bacterial outer membrane biogenesis; LPS core biosynthesis. Its function is as follows. Glycosyltransferase involved in the biosynthesis of the core oligosaccharide region of lipopolysaccharide (LPS). Catalyzes the addition of the second heptose unit to the heptosyl-Kdo2-lipid A module. The chain is Lipopolysaccharide heptosyltransferase 2 from Salmonella typhimurium (strain LT2 / SGSC1412 / ATCC 700720).